The chain runs to 552 residues: uncharacterized protein (552 aa).

A run of 4 helical transmembrane segments spans residues 127 to 147, 160 to 180, 393 to 413, and 517 to 537; these read AIMLSFILILFQPFFIIISLL, LIIVTCIILSTLIALLSYINI, LTKQISLFLSISLFLCCLSAV, and VIDSWFDEVYAFACVFTFICI.

The protein resides in the membrane. This is an uncharacterized protein from Saccharomyces cerevisiae (strain ATCC 204508 / S288c) (Baker's yeast).